The sequence spans 807 residues: Probable dimethyl sulfoxide reductase chain YnfF (807 aa).

The segment at residues 1 to 45 (MKIHTTEALMKAEISRRSLMKTSALGSLALASSAFTLPFSQMVRA) is a signal peptide (tat-type signal). The 4Fe-4S Mo/W bis-MGD-type domain occupies 52–113 (EKAVWSSCTV…SIRRRMNHPD (62 aa)). Cys-59, Cys-63, Cys-67, and Cys-99 together coordinate [4Fe-4S] cluster. Residue Ser-195 participates in Mo-bis(molybdopterin guanine dinucleotide) binding.

The protein belongs to the prokaryotic molybdopterin-containing oxidoreductase family. In terms of assembly, the complex consists of three subunits: YnfF, the reductase; YnfG, an electron transfer protein, and YnfH, a membrane anchor protein. It depends on [4Fe-4S] cluster as a cofactor. The cofactor is Mo-bis(molybdopterin guanine dinucleotide). Post-translationally, exported by the Tat system. The position of the signal peptide cleavage has not been experimentally proven. Can also be exported by the Sec system.

It localises to the cell membrane. In terms of biological role, terminal reductase during anaerobic growth on various sulfoxide and N-oxide compounds. The polypeptide is Probable dimethyl sulfoxide reductase chain YnfF (ynfF) (Escherichia coli (strain K12)).